The sequence spans 313 residues: Porphobilinogen deaminase (313 aa).

S-(dipyrrolylmethanemethyl)cysteine is present on cysteine 242.

The protein belongs to the HMBS family. Monomer. It depends on dipyrromethane as a cofactor.

The enzyme catalyses 4 porphobilinogen + H2O = hydroxymethylbilane + 4 NH4(+). It participates in porphyrin-containing compound metabolism; protoporphyrin-IX biosynthesis; coproporphyrinogen-III from 5-aminolevulinate: step 2/4. Its function is as follows. Tetrapolymerization of the monopyrrole PBG into the hydroxymethylbilane pre-uroporphyrinogen in several discrete steps. The polypeptide is Porphobilinogen deaminase (Klebsiella pneumoniae subsp. pneumoniae (strain ATCC 700721 / MGH 78578)).